Consider the following 331-residue polypeptide: Adenosine deaminase (331 aa).

Positions 12 and 14 each coordinate Zn(2+). Residues His-14, Asp-16, and Gly-170 each coordinate substrate. His-197 contributes to the Zn(2+) binding site. Glu-200 functions as the Proton donor in the catalytic mechanism. Zn(2+) is bound at residue Asp-278. Substrate is bound at residue Asp-279.

This sequence belongs to the metallo-dependent hydrolases superfamily. Adenosine and AMP deaminases family. Adenosine deaminase subfamily. The cofactor is Zn(2+).

The enzyme catalyses adenosine + H2O + H(+) = inosine + NH4(+). It carries out the reaction 2'-deoxyadenosine + H2O + H(+) = 2'-deoxyinosine + NH4(+). Catalyzes the hydrolytic deamination of adenosine and 2-deoxyadenosine. This is Adenosine deaminase from Shewanella sp. (strain MR-4).